Here is a 124-residue protein sequence, read N- to C-terminus: MKISVGNDIVENARIRDLLEKHGDRFLKRIFSESEREYCSNRKDPVPHLSGRFCVKEAFIKAIEPKVVLDMREIELFGKEFGKKELVLHGKSKELFLTKGYNGCSVSISHAENYSTAVVVLYKE.

Mg(2+) is bound by residues D8 and E57.

The protein belongs to the P-Pant transferase superfamily. AcpS family. It depends on Mg(2+) as a cofactor.

The protein resides in the cytoplasm. It catalyses the reaction apo-[ACP] + CoA = holo-[ACP] + adenosine 3',5'-bisphosphate + H(+). Transfers the 4'-phosphopantetheine moiety from coenzyme A to a Ser of acyl-carrier-protein. In Leptospira borgpetersenii serovar Hardjo-bovis (strain JB197), this protein is Holo-[acyl-carrier-protein] synthase.